The chain runs to 118 residues: Large ribosomal subunit protein bL19 (118 aa).

It belongs to the bacterial ribosomal protein bL19 family.

This protein is located at the 30S-50S ribosomal subunit interface and may play a role in the structure and function of the aminoacyl-tRNA binding site. The sequence is that of Large ribosomal subunit protein bL19 from Campylobacter curvus (strain 525.92).